The sequence spans 170 residues: Lipoprotein signal peptidase (170 aa).

3 helical membrane-spanning segments follow: residues Trp-12 to Ala-32, Trp-67 to Leu-87, and Gly-93 to Ile-113. Catalysis depends on residues Asp-123 and Asp-141. The chain crosses the membrane as a helical span at residues His-133 to Leu-153.

It belongs to the peptidase A8 family.

It localises to the cell inner membrane. It catalyses the reaction Release of signal peptides from bacterial membrane prolipoproteins. Hydrolyzes -Xaa-Yaa-Zaa-|-(S,diacylglyceryl)Cys-, in which Xaa is hydrophobic (preferably Leu), and Yaa (Ala or Ser) and Zaa (Gly or Ala) have small, neutral side chains.. It functions in the pathway protein modification; lipoprotein biosynthesis (signal peptide cleavage). Its function is as follows. This protein specifically catalyzes the removal of signal peptides from prolipoproteins. This is Lipoprotein signal peptidase from Shewanella loihica (strain ATCC BAA-1088 / PV-4).